The primary structure comprises 432 residues: Glutamyl-tRNA reductase (432 aa).

Residues 49 to 52 (TCNR), Ser-101, 106 to 108 (ESQ), and Gln-112 contribute to the substrate site. The active-site Nucleophile is the Cys-50. Residue 181–186 (GTGETI) participates in NADP(+) binding.

Belongs to the glutamyl-tRNA reductase family. In terms of assembly, homodimer.

The catalysed reaction is (S)-4-amino-5-oxopentanoate + tRNA(Glu) + NADP(+) = L-glutamyl-tRNA(Glu) + NADPH + H(+). It participates in porphyrin-containing compound metabolism; protoporphyrin-IX biosynthesis; 5-aminolevulinate from L-glutamyl-tRNA(Glu): step 1/2. In terms of biological role, catalyzes the NADPH-dependent reduction of glutamyl-tRNA(Glu) to glutamate 1-semialdehyde (GSA). The chain is Glutamyl-tRNA reductase from Xylella fastidiosa (strain M12).